The chain runs to 131 residues: Small ribosomal subunit protein uS9 (131 aa).

This sequence belongs to the universal ribosomal protein uS9 family.

The protein is Small ribosomal subunit protein uS9 of Haemophilus ducreyi (strain 35000HP / ATCC 700724).